A 285-amino-acid polypeptide reads, in one-letter code: Bifunctional protein FolD (285 aa).

NADP(+) is bound by residues 165–167 and Ser-190; that span reads GRS.

It belongs to the tetrahydrofolate dehydrogenase/cyclohydrolase family. Homodimer.

The catalysed reaction is (6R)-5,10-methylene-5,6,7,8-tetrahydrofolate + NADP(+) = (6R)-5,10-methenyltetrahydrofolate + NADPH. It carries out the reaction (6R)-5,10-methenyltetrahydrofolate + H2O = (6R)-10-formyltetrahydrofolate + H(+). It participates in one-carbon metabolism; tetrahydrofolate interconversion. Catalyzes the oxidation of 5,10-methylenetetrahydrofolate to 5,10-methenyltetrahydrofolate and then the hydrolysis of 5,10-methenyltetrahydrofolate to 10-formyltetrahydrofolate. The sequence is that of Bifunctional protein FolD from Burkholderia orbicola (strain AU 1054).